A 263-amino-acid polypeptide reads, in one-letter code: 4-hydroxy-2-oxo-heptane-1,7-dioate aldolase (263 aa).

The Proton acceptor role is filled by histidine 45. Residue glutamine 147 coordinates substrate. Glutamate 149 lines the a divalent metal cation pocket. Residues alanine 174 and aspartate 175 each contribute to the substrate site. Aspartate 175 lines the a divalent metal cation pocket.

It belongs to the HpcH/HpaI aldolase family. In terms of assembly, homohexamer; trimer of dimers. A divalent metal cation serves as cofactor.

The catalysed reaction is 4-hydroxy-2-oxoheptanedioate = succinate semialdehyde + pyruvate. It participates in aromatic compound metabolism; 4-hydroxyphenylacetate degradation; pyruvate and succinate semialdehyde from 4-hydroxyphenylacetate: step 7/7. In terms of biological role, catalyzes the reversible retro-aldol cleavage of 4-hydroxy-2-ketoheptane-1,7-dioate (HKHD) to pyruvate and succinic semialdehyde. The polypeptide is 4-hydroxy-2-oxo-heptane-1,7-dioate aldolase (Salmonella arizonae (strain ATCC BAA-731 / CDC346-86 / RSK2980)).